The chain runs to 918 residues: Isoleucine--tRNA ligase (918 aa).

Positions 57–67 (PYANGHIHIGH) match the 'HIGH' region motif. L-isoleucyl-5'-AMP is bound at residue Glu564. The 'KMSKS' region signature appears at 605 to 609 (KMSKS). ATP is bound at residue Lys608. Residues Cys888, Cys891, Cys903, and Cys906 each coordinate Zn(2+).

This sequence belongs to the class-I aminoacyl-tRNA synthetase family. IleS type 1 subfamily. Monomer. Requires Zn(2+) as cofactor.

The protein localises to the cytoplasm. The catalysed reaction is tRNA(Ile) + L-isoleucine + ATP = L-isoleucyl-tRNA(Ile) + AMP + diphosphate. Functionally, catalyzes the attachment of isoleucine to tRNA(Ile). As IleRS can inadvertently accommodate and process structurally similar amino acids such as valine, to avoid such errors it has two additional distinct tRNA(Ile)-dependent editing activities. One activity is designated as 'pretransfer' editing and involves the hydrolysis of activated Val-AMP. The other activity is designated 'posttransfer' editing and involves deacylation of mischarged Val-tRNA(Ile). The protein is Isoleucine--tRNA ligase of Nitratiruptor sp. (strain SB155-2).